Here is a 392-residue protein sequence, read N- to C-terminus: Speckle-type POZ protein-like (392 aa).

The MATH domain occupies 31 to 161 (KFSYMWTINN…DDKLTLFCEV (131 aa)). The BTB domain maps to 200-267 (TDCCFFVRGK…VYTGKAPNLD (68 aa)).

The protein belongs to the Tdpoz family. As to quaternary structure, homodimer. Heterodimer with SPOP. Component of cullin-RING-based BCR (BTB-CUL3-RBX1) E3 ubiquitin-protein ligase complexes containing homodimeric SPOPL or the heterodimer formed by SPOP and SPOPL. Interacts with CUL3 and MACROH2A1.

Its subcellular location is the nucleus. The protein operates within protein modification; protein ubiquitination. Its function is as follows. Component of a cullin-RING-based BCR (BTB-CUL3-RBX1) E3 ubiquitin-protein ligase complex that mediates the ubiquitination and subsequent proteasomal degradation of target proteins, but with relatively low efficiency. Cullin-RING-based BCR (BTB-CUL3-RBX1) E3 ubiquitin-protein ligase complexes containing homodimeric SPOPL or the heterodimer formed by SPOP and SPOPL are less efficient than ubiquitin ligase complexes containing only SPOP. May function to down-regulate the activity of cullin-RING-based BCR (BTB-CUL3-RBX1) E3 ubiquitin-protein ligase complexes that contain SPOP. This is Speckle-type POZ protein-like (Spopl) from Mus musculus (Mouse).